A 261-amino-acid polypeptide reads, in one-letter code: tRNA pseudouridine synthase A (261 aa).

The Nucleophile role is filled by Asp-51. Tyr-109 is a binding site for substrate.

It belongs to the tRNA pseudouridine synthase TruA family. Homodimer.

The enzyme catalyses uridine(38/39/40) in tRNA = pseudouridine(38/39/40) in tRNA. Its function is as follows. Formation of pseudouridine at positions 38, 39 and 40 in the anticodon stem and loop of transfer RNAs. This chain is tRNA pseudouridine synthase A, found in Shewanella sp. (strain ANA-3).